Here is a 446-residue protein sequence, read N- to C-terminus: Na(+)-translocating NADH-quinone reductase subunit A (446 aa).

This sequence belongs to the NqrA family. Composed of six subunits; NqrA, NqrB, NqrC, NqrD, NqrE and NqrF.

It catalyses the reaction a ubiquinone + n Na(+)(in) + NADH + H(+) = a ubiquinol + n Na(+)(out) + NAD(+). This reaction is tightly coupled to the Na(+) pumping activity and specifically requires Na(+) for activity. Inhibited by korormicin and 2-N-heptyl-4-hydroxyquinoline N-oxide (HQNO). Its function is as follows. NQR complex catalyzes the reduction of ubiquinone-1 to ubiquinol by two successive reactions, coupled with the transport of Na(+) ions from the cytoplasm to the periplasm. NqrA to NqrE are probably involved in the second step, the conversion of ubisemiquinone to ubiquinol. This Vibrio alginolyticus protein is Na(+)-translocating NADH-quinone reductase subunit A.